Consider the following 417-residue polypeptide: Alpha-ionylideneethane synthase aba3 (417 aa).

It belongs to the alpha-ionylideneethane synthase family.

Its pathway is hormone biosynthesis. Alpha-ionylideneethane synthase; part of the gene cluster that mediates the biosynthesis of abscisic acid (ABA), a phytohormone that acts antagonistically toward salicylic acid (SA), jasmonic acid (JA) and ethylene (ETH) signaling, to impede plant defense responses. The first step of the pathway catalyzes the reaction from farnesyl diphosphate to alpha-ionylideneethane performed by the alpha-ionylideneethane synthase aba3 via a three-step reaction mechanism involving 2 neutral intermediates, beta-farnesene and allofarnesene. The cytochrome P450 monooxygenase aba1 might then be involved in the conversion of alpha-ionylideneethane to alpha-ionylideneacetic acid. Alpha-ionylideneacetic acid is further converted to abscisic acid in 2 steps involving the cytochrome P450 monooxygenase aba2 and the short-chain dehydrogenase/reductase aba4, via the intermediates 1'-deoxy-ABA or 1',4'-trans-diol-ABA, depending on the order of action of these 2 enzymes. Aba2 is responsible for the hydroxylation of carbon atom C-1' and aba4 might be involved in the oxidation of the C-4' carbon atom. This is Alpha-ionylideneethane synthase aba3 from Botryotinia fuckeliana (Noble rot fungus).